The chain runs to 1363 residues: Insulin-like peptide receptor (1363 aa).

The N-terminal stretch at 1 to 29 (MRVVDKMAGLMWAALTLVIGLGLLVPSNG) is a signal peptide. N-linked (GlcNAc...) asparagine glycosylation is found at Asn-51, Asn-97, Asn-137, Asn-278, Asn-483, Asn-599, Asn-617, Asn-665, Asn-666, Asn-711, Asn-732, Asn-736, Asn-743, Asn-816, Asn-885, and Asn-898. Fibronectin type-III domains follow at residues 473-586 (SFSR…TDAD) and 590-680 (HPQD…CPKS). Fibronectin type-III domains follow at residues 712 to 804 (ETRA…LART) and 813 to 912 (IPGN…VEEE). The Extracellular portion of the chain corresponds to 721-928 (ELPVTARPFY…QDPQQQVPVS (208 aa)). The tract at residues 739 to 759 (LPSTNRTVPPTPTPNPNPQLE) is disordered. A helical membrane pass occupies residues 929 to 949 (LMIGMGVGFSLLLILAVIFGI). Over 950–1363 (WYCTKKRFGD…NLRIPKSTLC (414 aa)) the chain is Cytoplasmic. A Protein kinase domain is found at 994-1283 (ITLIRELGQG…EIVEILSPEL (290 aa)). ATP-binding positions include 1000 to 1008 (LGQGSFGMV) and Lys-1028. The disordered stretch occupies residues 1091-1117 (PEEDVGLSDSPASNEAKNSPFAENDND). Asp-1148 serves as the catalytic Proton acceptor. Residue Tyr-1174 is modified to Phosphotyrosine; by autocatalysis. The disordered stretch occupies residues 1316-1363 (DTETEMYPSGSEFSSTPSPPSETPYSHMNGSHPQNGSMNLRIPKSTLC). Residues 1322 to 1331 (YPSGSEFSST) are compositionally biased toward low complexity. Over residues 1343-1353 (MNGSHPQNGSM) the composition is skewed to polar residues.

The protein belongs to the protein kinase superfamily. Tyr protein kinase family. Insulin receptor subfamily. In terms of assembly, probable tetramer of 2 alpha and 2 beta chains linked by disulfide bonds. The alpha chains contribute to the formation of the ligand-binding domain, while the beta chains carry the kinase domain. Requires Mn(2+) as cofactor.

It is found in the membrane. The enzyme catalyses L-tyrosyl-[protein] + ATP = O-phospho-L-tyrosyl-[protein] + ADP + H(+). Its function is as follows. This receptor binds to the insulin related peptide and has a tyrosine-protein kinase activity. This is Insulin-like peptide receptor from Branchiostoma lanceolatum (Common lancelet).